A 696-amino-acid polypeptide reads, in one-letter code: C2 domain-containing protein 2 (696 aa).

A helical transmembrane segment spans residues 8 to 28; sequence VQWLFLVSLFVAALGTVGLYL. Residues 45–238 enclose the SMP-LBD domain; sequence EPDELRRRES…PTQVKEAQSL (194 aa). Ser-54 is modified (phosphoserine). Positions 241 to 357 constitute a C2 domain; that stretch reads PSSTAQEPCP…RKQPNGPQTF (117 aa). Ser-436 carries the post-translational modification Phosphoserine. Phosphothreonine is present on Thr-440. Residues 551–611 are disordered; sequence ATEASATTPP…DGDELSESSL (61 aa). Basic and acidic residues predominate over residues 573–588; sequence KPRENDLDSWELEKES. Position 581 is a phosphoserine (Ser-581).

The protein resides in the membrane. The chain is C2 domain-containing protein 2 from Mus musculus (Mouse).